Here is a 491-residue protein sequence, read N- to C-terminus: Nicotinamide phosphoribosyltransferase (491 aa).

At methionine 1 the chain carries N-acetylmethionine. Residue tyrosine 188 is modified to Phosphotyrosine. Arginine 196 is a binding site for diphosphate. Residue aspartate 219 participates in beta-nicotinamide D-ribonucleotide binding. Histidine 247 and arginine 311 together coordinate diphosphate. Residues 311 to 313, 353 to 354, glycine 384, and arginine 392 each bind beta-nicotinamide D-ribonucleotide; these read RPD and GD. Position 472 is a phosphoserine (serine 472).

This sequence belongs to the NAPRTase family. As to quaternary structure, homodimer.

It is found in the nucleus. It localises to the cytoplasm. The protein resides in the secreted. It carries out the reaction beta-nicotinamide D-ribonucleotide + diphosphate = 5-phospho-alpha-D-ribose 1-diphosphate + nicotinamide + H(+). It functions in the pathway cofactor biosynthesis; NAD(+) biosynthesis; nicotinamide D-ribonucleotide from 5-phospho-alpha-D-ribose 1-diphosphate and nicotinamide: step 1/1. Functionally, catalyzes the condensation of nicotinamide with 5-phosphoribosyl-1-pyrophosphate to yield nicotinamide mononucleotide, an intermediate in the biosynthesis of NAD. It is the rate limiting component in the mammalian NAD biosynthesis pathway. The secreted form behaves both as a cytokine with immunomodulating properties and an adipokine with anti-diabetic properties, it has no enzymatic activity, partly because of lack of activation by ATP, which has a low level in extracellular space and plasma. Plays a role in the modulation of circadian clock function. Plays a role in the modulation of circadian clock function. NAMPT-dependent oscillatory production of NAD regulates oscillation of clock target gene expression by releasing the core clock component: CLOCK-BMAL1 heterodimer from NAD-dependent SIRT1-mediated suppression. The chain is Nicotinamide phosphoribosyltransferase (NAMPT) from Sus scrofa (Pig).